The sequence spans 388 residues: Succinate--CoA ligase [ADP-forming] subunit beta (388 aa).

In terms of domain architecture, ATP-grasp spans 9-244 (KQLFAQYGLP…PAQNDAREAH (236 aa)). Residues K46, 53 to 55 (GRG), E99, T102, and E107 each bind ATP. 2 residues coordinate Mg(2+): N199 and D213. Substrate-binding positions include N264 and 321–323 (GIV).

Belongs to the succinate/malate CoA ligase beta subunit family. Heterotetramer of two alpha and two beta subunits. It depends on Mg(2+) as a cofactor.

It carries out the reaction succinate + ATP + CoA = succinyl-CoA + ADP + phosphate. The catalysed reaction is GTP + succinate + CoA = succinyl-CoA + GDP + phosphate. It participates in carbohydrate metabolism; tricarboxylic acid cycle; succinate from succinyl-CoA (ligase route): step 1/1. Functionally, succinyl-CoA synthetase functions in the citric acid cycle (TCA), coupling the hydrolysis of succinyl-CoA to the synthesis of either ATP or GTP and thus represents the only step of substrate-level phosphorylation in the TCA. The beta subunit provides nucleotide specificity of the enzyme and binds the substrate succinate, while the binding sites for coenzyme A and phosphate are found in the alpha subunit. The chain is Succinate--CoA ligase [ADP-forming] subunit beta from Edwardsiella ictaluri (strain 93-146).